Here is a 426-residue protein sequence, read N- to C-terminus: Trophoblast glycoprotein (426 aa).

The signal sequence occupies residues 1–31 (MPGAGSRGPSAGDGRLRLARLALVLLGWVSA). The Extracellular portion of the chain corresponds to 32–361 (SAPSSSVPSS…AVLPQSLQTS (330 aa)). The span at 33–47 (APSSSVPSSSTSPAA) shows a compositional bias: low complexity. The disordered stretch occupies residues 33–53 (APSSSVPSSSTSPAAFLASGS). The LRRNT domain maps to 53 to 91 (SAQPPPAERCPAACECSEAARTVKCVNRNLLEVPADLPP). Intrachain disulfides connect cysteine 62–cysteine 68 and cysteine 66–cysteine 77. LRR repeat units follow at residues 92–113 (YVRNLFLTGNQMTVLPAGAFAR), 116–139 (PLADLEALNLSGNHLKEVCAGAFE), 141–163 (LPGLRRLDLSHNPLTNLSAFAFA), 172–210 (PSPLEELILNHIVPPEDQRQNGSFEGMVAFEGMVAAALR), 215–238 (LRGLTRLELASNHFLFLPRDLLAQ), 239–261 (LPSLRYLDLRNNSLVSLTYASFR), and 262–281 (NLTHLESLHLEDNALKVLHN). An N-linked (GlcNAc...) asparagine glycan is attached at asparagine 124. N-linked (GlcNAc...) asparagine glycosylation occurs at asparagine 281. Positions 289 to 352 (GLAHVKVFLD…LNSSDLDCDA (64 aa)) constitute an LRRCT domain. 2 cysteine pairs are disulfide-bonded: cysteine 304–cysteine 329 and cysteine 306–cysteine 350. Residues 362 to 382 (YVFLGIVLALIGAIFLLVLYL) traverse the membrane as a helical segment. The Cytoplasmic segment spans residues 383–426 (NRKGIKKWMHNIRDACRDHMEGYHYRYEINADPRLTNLSSNSDV). The residue at position 424 (serine 424) is a Phosphoserine.

In terms of processing, highly glycosylated. In terms of tissue distribution, highly expressed in embryo and placenta. In adult, expressed only in brain and ovary. Not detected in kidney small intestine, heart, spleen, testis, liver, lung, thymus and stomach.

It is found in the cell membrane. Functionally, may function as an inhibitor of Wnt/beta-catenin signaling by indirectly interacting with LRP6 and blocking Wnt3a-dependent LRP6 internalization. The polypeptide is Trophoblast glycoprotein (Tpbg) (Mus musculus (Mouse)).